Consider the following 122-residue polypeptide: Insulin-like growth factor 1 (122 aa).

The b stretch occupies residues 49 to 77; the sequence is GPETLCGAELVDALQFVCGDRGFYFNKPT. Cystine bridges form between cysteine 54–cysteine 96, cysteine 66–cysteine 109, and cysteine 95–cysteine 100. The interval 78-89 is c; the sequence is GYGSSSRRAPQT. Residues 90–110 are a; the sequence is GIVDECCFRSCDLRRLEMYCA. The d stretch occupies residues 111–118; the sequence is PLKPAKSA. A propeptide spans 119 to 122 (e peptide); sequence RSVR.

Belongs to the insulin family. Forms a ternary complex with IGFR1 and ITGAV:ITGB3. Forms a ternary complex with IGFR1 and ITGA6:ITGB4. Forms a ternary complex with IGFBP3 and ALS.

The protein localises to the secreted. Its function is as follows. The insulin-like growth factors, isolated from plasma, are structurally and functionally related to insulin but have a much higher growth-promoting activity. May be a physiological regulator of [1-14C]-2-deoxy-D-glucose (2DG) transport and glycogen synthesis in osteoblasts. Stimulates glucose transport in bone-derived osteoblastic (PyMS) cells and is effective at much lower concentrations than insulin, not only regarding glycogen and DNA synthesis but also with regard to enhancing glucose uptake. May play a role in synapse maturation. Ca(2+)-dependent exocytosis of IGF1 is required for sensory perception of smell in the olfactory bulb. Acts as a ligand for IGF1R. Binds to the alpha subunit of IGF1R, leading to the activation of the intrinsic tyrosine kinase activity which autophosphorylates tyrosine residues in the beta subunit thus initiating a cascade of down-stream signaling events leading to activation of the PI3K-AKT/PKB and the Ras-MAPK pathways. Binds to integrins ITGAV:ITGB3 and ITGA6:ITGB4. Its binding to integrins and subsequent ternary complex formation with integrins and IGFR1 are essential for IGF1 signaling. Induces the phosphorylation and activation of IGFR1, MAPK3/ERK1, MAPK1/ERK2 and AKT1. As part of the MAPK/ERK signaling pathway, acts as a negative regulator of apoptosis in cardiomyocytes via promotion of STUB1/CHIP-mediated ubiquitination and degradation of ICER-type isoforms of CREM. The chain is Insulin-like growth factor 1 from Equus caballus (Horse).